A 147-amino-acid polypeptide reads, in one-letter code: Histidine-containing phosphotransfer protein 1 (147 aa).

One can recognise an HPt domain in the interval 38-133; that stretch reads APDFVSEVVT…YDLRNKFQAM (96 aa). A Phosphohistidine modification is found at histidine 79.

In terms of processing, two-component system major event consists of a His-to-Asp phosphorelay between a sensor histidine kinase (HK) and a response regulator (RR). In plants, the His-to-Asp phosphorelay involves an additional intermediate named Histidine-containing phosphotransfer protein (HPt). This multistep phosphorelay consists of a His-Asp-His-Asp sequential transfer of a phosphate group between first a His and an Asp of the HK protein, followed by the transfer to a conserved His of the HPt protein and finally the transfer to an Asp in the receiver domain of the RR protein. As to expression, widely expressed.

The protein resides in the cytoplasm. Its subcellular location is the cytosol. It localises to the nucleus. In terms of biological role, functions as a two-component phosphorelay mediators between cytokinin sensor histidine kinases and response regulators (B-type ARRs). Plays an important role in propagating cytokinin signal transduction through the multistep His-to-Asp phosphorelay. Functions as a positive regulator of the cytokinin signaling pathway. May play a regulatory role in salt and drought tolerance during plant development. The polypeptide is Histidine-containing phosphotransfer protein 1 (Oryza sativa subsp. japonica (Rice)).